A 182-amino-acid chain; its full sequence is uncharacterized protein (182 aa).

Disordered stretches follow at residues 17 to 53 (AVSQAQGRPGHPDAPPNIYEGGLGSPQPQCPSAQGSK) and 128 to 159 (DSLGSSASSSSMDPDKGALPQPSPSRLRPKRS). Residues 42-53 (PQPQCPSAQGSK) are compositionally biased toward polar residues. Residues 129–138 (SLGSSASSSS) show a composition bias toward low complexity.

This is an uncharacterized protein from Homo sapiens (Human).